Here is a 294-residue protein sequence, read N- to C-terminus: ATP synthase gamma chain (294 aa).

This sequence belongs to the ATPase gamma chain family. In terms of assembly, F-type ATPases have 2 components, CF(1) - the catalytic core - and CF(0) - the membrane proton channel. CF(1) has five subunits: alpha(3), beta(3), gamma(1), delta(1), epsilon(1). CF(0) has three main subunits: a, b and c.

It is found in the cell inner membrane. Produces ATP from ADP in the presence of a proton gradient across the membrane. The gamma chain is believed to be important in regulating ATPase activity and the flow of protons through the CF(0) complex. This is ATP synthase gamma chain from Campylobacter lari (strain RM2100 / D67 / ATCC BAA-1060).